The following is a 123-amino-acid chain: Sterol carrier protein 2 (123 aa).

An SCP2 domain is found at 16–113 (KEHLSTDAGK…GSLSAAQKFT (98 aa)). Positions 121 to 123 (SKL) match the Microbody targeting signal motif.

In terms of tissue distribution, expressed in most tissues including seedlings, cotyledons, inflorescence, leaves, stems, roots, siliques and flower buds, with the highest levels in floral tissues and in maturing seeds.

It is found in the peroxisome. In terms of biological role, enhances the transfer of lipids between membranes in vitro. Active on phosphatidylcholine (PC), 1-palmitoyl 2-oleoyl phosphatidylcholine (POPC) and ergosterol, and, to a lower extent, dimyristoyl phosphatidic acid, stigmasterol, desmosterol, beta-sitosterol and steryl glucoside. Inactive or poorly active on palmitic acid, stearoyl-coenzyme A, cholesterol, glucosylceramide and ceramide. Required during seeds and seedlings development. This chain is Sterol carrier protein 2, found in Arabidopsis thaliana (Mouse-ear cress).